We begin with the raw amino-acid sequence, 61 residues long: Weak toxin CM-2 (61 aa).

4 disulfides stabilise this stretch: Cys-3–Cys-21, Cys-14–Cys-37, Cys-41–Cys-53, and Cys-54–Cys-59.

The protein belongs to the three-finger toxin family. Short-chain subfamily. Orphan group VI sub-subfamily. In terms of tissue distribution, expressed by the venom gland.

It localises to the secreted. This is Weak toxin CM-2 from Naja haje haje (Egyptian cobra).